Here is a 75-residue protein sequence, read N- to C-terminus: Small ribosomal subunit protein bS18 (75 aa).

Belongs to the bacterial ribosomal protein bS18 family. In terms of assembly, part of the 30S ribosomal subunit. Forms a tight heterodimer with protein bS6.

Functionally, binds as a heterodimer with protein bS6 to the central domain of the 16S rRNA, where it helps stabilize the platform of the 30S subunit. The chain is Small ribosomal subunit protein bS18 from Mycoplasma capricolum subsp. capricolum (strain California kid / ATCC 27343 / NCTC 10154).